The following is a 58-amino-acid chain: Small ribosomal subunit protein bS21 (58 aa).

A disordered region spans residues 27-58 (GVLSEARKHEHYEKPSVKRKKKSEAARKRKFK). Residues 31-42 (EARKHEHYEKPS) are compositionally biased toward basic and acidic residues. The span at 43–58 (VKRKKKSEAARKRKFK) shows a compositional bias: basic residues.

Belongs to the bacterial ribosomal protein bS21 family.

This chain is Small ribosomal subunit protein bS21, found in Desulfitobacterium hafniense (strain DSM 10664 / DCB-2).